A 189-amino-acid polypeptide reads, in one-letter code: Molybdopterin synthase catalytic subunit (189 aa).

A compositionally biased stretch (polar residues) spans 1-30 (MSSLEISNSCFSPETRSPSSRQSVEDNASE). The segment at 1–41 (MSSLEISNSCFSPETRSPSSRQSVEDNASEPSGKDVDDVQE) is disordered. Ser20 is subject to Phosphoserine. Basic and acidic residues predominate over residues 32–41 (SGKDVDDVQE). Substrate is bound by residues 143 to 144 (HR), Lys159, and 166 to 168 (KKE).

The protein belongs to the MoaE family. MOCS2B subfamily. As to quaternary structure, heterotetramer; composed of 2 small (MOCS2A) and 2 large (MOCS2B) subunits.

It localises to the cytoplasm. Its subcellular location is the cytosol. The catalysed reaction is 2 [molybdopterin-synthase sulfur-carrier protein]-C-terminal-Gly-aminoethanethioate + cyclic pyranopterin phosphate + H2O = molybdopterin + 2 [molybdopterin-synthase sulfur-carrier protein]-C-terminal Gly-Gly + 2 H(+). It participates in cofactor biosynthesis; molybdopterin biosynthesis. Catalytic subunit of the molybdopterin synthase complex, a complex that catalyzes the conversion of precursor Z into molybdopterin. Acts by mediating the incorporation of 2 sulfur atoms from thiocarboxylated MOCS2A into precursor Z to generate a dithiolene group. The chain is Molybdopterin synthase catalytic subunit from Mus musculus (Mouse).